Reading from the N-terminus, the 432-residue chain is Adenylosuccinate synthetase (432 aa).

GTP is bound by residues 13-19 (GDEGKGK) and 41-43 (GHT). The Proton acceptor role is filled by aspartate 14. Mg(2+) is bound by residues aspartate 14 and glycine 41. Residues 14–17 (DEGK), 39–42 (NAGH), threonine 130, arginine 144, glutamine 225, threonine 240, and arginine 304 each bind IMP. The active-site Proton donor is the histidine 42. 300–306 (ATTGRRR) is a substrate binding site. GTP contacts are provided by residues arginine 306, 332-334 (KLD), and 415-417 (STG).

Belongs to the adenylosuccinate synthetase family. Homodimer. The cofactor is Mg(2+).

The protein localises to the cytoplasm. The catalysed reaction is IMP + L-aspartate + GTP = N(6)-(1,2-dicarboxyethyl)-AMP + GDP + phosphate + 2 H(+). It participates in purine metabolism; AMP biosynthesis via de novo pathway; AMP from IMP: step 1/2. Its function is as follows. Plays an important role in the de novo pathway of purine nucleotide biosynthesis. Catalyzes the first committed step in the biosynthesis of AMP from IMP. This chain is Adenylosuccinate synthetase, found in Pectobacterium atrosepticum (strain SCRI 1043 / ATCC BAA-672) (Erwinia carotovora subsp. atroseptica).